We begin with the raw amino-acid sequence, 399 residues long: Paraneoplastic antigen-like protein 6A (399 aa).

The protein belongs to the PNMA family. As to expression, expressed in the brain.

This is Paraneoplastic antigen-like protein 6A from Homo sapiens (Human).